Reading from the N-terminus, the 102-residue chain is Small ribosomal subunit protein uS10 (102 aa).

It belongs to the universal ribosomal protein uS10 family. Part of the 30S ribosomal subunit.

In terms of biological role, involved in the binding of tRNA to the ribosomes. The polypeptide is Small ribosomal subunit protein uS10 (Staphylococcus aureus (strain Mu3 / ATCC 700698)).